The sequence spans 376 residues: tRNA pseudouridine synthase C (376 aa).

Asp168 is an active-site residue.

In the C-terminal section; belongs to the pseudouridine synthase RluA family. This sequence to E.coli YqcC in the N-terminal section.

It carries out the reaction uridine(65) in tRNA = pseudouridine(65) in tRNA. Functionally, responsible for synthesis of pseudouridine from uracil-65 in transfer RNAs. This is tRNA pseudouridine synthase C (truC) from Pectobacterium carotovorum subsp. carotovorum (Erwinia carotovora subsp. carotovora).